Here is a 239-residue protein sequence, read N- to C-terminus: Phosphothreonine lyase OspF (239 aa).

His-104 serves as the catalytic Proton donor. Lys-134 (proton acceptor) is an active-site residue.

Belongs to the phosphothreonine lyase family.

Its subcellular location is the secreted. In terms of biological role, catalyzes the removal of the phosphate group from the phosphothreonine in the mitogen-activated protein kinases such as MAPK2/ERK2, MAPK3/ERK1, MAPK8 and MAPK14 in an irreversible reaction, thus preventing the downstream phosphorylation of histone H3. This epigenetic modification results in inhibition of the transcription of a specific subset of pro-inflammatory genes, and ultimately to a reduced immune response against the invading pathogen. The diminished immune response enhances the bacterium's ability to disseminate and multiply within the host. This is Phosphothreonine lyase OspF (ospF) from Shigella sonnei (strain Ss046).